We begin with the raw amino-acid sequence, 452 residues long: Trigger factor (452 aa).

In terms of domain architecture, PPIase FKBP-type spans 162-247; that stretch reads GDTVTIDYKG…IHEVKSKQLP (86 aa). Residues 427-452 form a disordered region; the sequence is AKAKLEAKEAEEAEDKEEAEDKKENK.

It belongs to the FKBP-type PPIase family. Tig subfamily.

It localises to the cytoplasm. The catalysed reaction is [protein]-peptidylproline (omega=180) = [protein]-peptidylproline (omega=0). Involved in protein export. Acts as a chaperone by maintaining the newly synthesized protein in an open conformation. Functions as a peptidyl-prolyl cis-trans isomerase. In Lactobacillus helveticus (strain DPC 4571), this protein is Trigger factor.